Here is a 230-residue protein sequence, read N- to C-terminus: Cytochrome b6-f complex iron-sulfur subunit, chloroplastic (230 aa).

The N-terminal 51 residues, 1 to 51 (MASFTLSSATPSQLCSSKNGMFAPSLALAKAGRVNVLISKERIRGMKLTCQ), are a transit peptide targeting the chloroplast. The chain crosses the membrane as a helical span at residues 73–93 (LLGALSLPTGYMLLPYASFFV). The Rieske domain occupies 116–212 (AAEWLKTHAP…CDVDDGKVVF (97 aa)). Residues Cys158, His160, Cys176, and His179 each coordinate [2Fe-2S] cluster. Cysteines 163 and 178 form a disulfide.

It belongs to the Rieske iron-sulfur protein family. In terms of assembly, the 4 large subunits of the cytochrome b6-f complex are cytochrome b6, subunit IV (17 kDa polypeptide, petD), cytochrome f and the Rieske protein, while the 4 small subunits are petG, petL, petM and petN. The complex functions as a dimer. It depends on [2Fe-2S] cluster as a cofactor.

Its subcellular location is the plastid. The protein resides in the chloroplast thylakoid membrane. The catalysed reaction is 2 oxidized [plastocyanin] + a plastoquinol + 2 H(+)(in) = 2 reduced [plastocyanin] + a plastoquinone + 4 H(+)(out). Its function is as follows. Component of the cytochrome b6-f complex, which mediates electron transfer between photosystem II (PSII) and photosystem I (PSI), cyclic electron flow around PSI, and state transitions. This is Cytochrome b6-f complex iron-sulfur subunit, chloroplastic (petC) from Spinacia oleracea (Spinach).